The chain runs to 881 residues: Squamosa promoter-binding-like protein 1 (881 aa).

The disordered stretch occupies residues F49 to K69. Low complexity predominate over residues N53–S62. Positions P96–N187 are sufficient and necessary for DNA binding. Residues G103 to T180 form an SBP-type zinc finger. Residues C106, C111, C128, H131, C147, C150, H154, and C166 each coordinate Zn(2+). The short motif at K163–K179 is the Bipartite nuclear localization signal element. The segment covering L170 to K179 has biased composition (basic residues). Disordered stretches follow at residues L170–D193 and F274–Q358. Positions S275 to E284 are enriched in polar residues. Basic and acidic residues predominate over residues N285–D295. Over residues P319–T338 the composition is skewed to polar residues. Residues S339 to D356 show a composition bias toward low complexity.

Zn(2+) serves as cofactor.

The protein resides in the nucleus. In terms of biological role, trans-acting factor that binds specifically to the consensus nucleotide sequence 5'-TNCGTACAA-3' of AP1 promoter. Binds specifically to the 5'-GTAC-3' core sequence. This Arabidopsis thaliana (Mouse-ear cress) protein is Squamosa promoter-binding-like protein 1 (SPL1).